The chain runs to 141 residues: Large ribosomal subunit protein uL11 (141 aa).

It belongs to the universal ribosomal protein uL11 family. In terms of assembly, part of the ribosomal stalk of the 50S ribosomal subunit. Interacts with L10 and the large rRNA to form the base of the stalk. L10 forms an elongated spine to which L12 dimers bind in a sequential fashion forming a multimeric L10(L12)X complex. One or more lysine residues are methylated.

Its function is as follows. Forms part of the ribosomal stalk which helps the ribosome interact with GTP-bound translation factors. The protein is Large ribosomal subunit protein uL11 of Selenomonas ruminantium.